We begin with the raw amino-acid sequence, 548 residues long: Rop guanine nucleotide exchange factor 1 (548 aa).

Acidic residues predominate over residues 1 to 12 (MGSLSSEEDDEV). The tract at residues 1–38 (MGSLSSEEDDEVSSERCGSYSPSADISESESSSSFSCH) is disordered. Over residues 19 to 36 (SYSPSADISESESSSSFS) the composition is skewed to low complexity. In terms of domain architecture, PRONE spans 81–462 (DKQPDNDLSE…DAMRRSISVT (382 aa)). The interval 458–548 (SISVTESLSL…RVTGVTPERD (91 aa)) is involved in auto-inhibition. 2 positions are modified to phosphoserine: S460 and S480.

As to quaternary structure, interacts with ARAC10/ROP11 and FER. Forms a complex with ARAC11/ROP1 and PRK2. Interacts in vitro (via PRONE domain) with PRK1, PRK2, PRK3 and PRK4. The C-terminal region is also important for the interaction with PRK2. Post-translationally, phosphorylated at Ser-460 and Ser-480 by PRK2. In terms of tissue distribution, expressed in roots, cotyledons, leaves, stems, sepals, petals, anthers, pollen grains, stigmas and siliques.

It localises to the cytoplasm. Its subcellular location is the cytosol. The protein localises to the cell membrane. With respect to regulation, phosphorylation at Ser-460 and Ser-480 by PRK2 releases ROPGEF1 auto-inhibition, thereby activating ROPGEF1, which in turn activates ARAC11/ROP1. Guanine-nucleotide exchange factor (GEF) that acts as an activator of Rop (Rho of plants) GTPases by promoting the exchange of GDP for GTP. Acts downstream of PRK2 in the control of polarized pollen tube growth by activating ARAC11/ROP1. In association with ROPGEF4, acts as a specific regulator of ARAC10/ROP11 function in ABA-mediated stomatal closure. May play a role in the Rac/Rop-signaling pathway that controls ROS-mediated root hair development. The polypeptide is Rop guanine nucleotide exchange factor 1 (ROPGEF1) (Arabidopsis thaliana (Mouse-ear cress)).